Reading from the N-terminus, the 348-residue chain is Dihydroorotate dehydrogenase (quinone) (348 aa).

FMN is bound by residues 65-69 (AGMDK) and T89. Residue K69 coordinates substrate. Substrate is bound at residue 114-118 (NRMGF). Residues N143 and N176 each contribute to the FMN site. N176 is a binding site for substrate. S179 acts as the Nucleophile in catalysis. N181 contacts substrate. FMN is bound by residues K221 and T249. 250–251 (NT) is a binding site for substrate. Residues G272, G301, and 322–323 (YT) contribute to the FMN site.

The protein belongs to the dihydroorotate dehydrogenase family. Type 2 subfamily. In terms of assembly, monomer. Requires FMN as cofactor.

It localises to the cell membrane. It carries out the reaction (S)-dihydroorotate + a quinone = orotate + a quinol. It participates in pyrimidine metabolism; UMP biosynthesis via de novo pathway; orotate from (S)-dihydroorotate (quinone route): step 1/1. Functionally, catalyzes the conversion of dihydroorotate to orotate with quinone as electron acceptor. The sequence is that of Dihydroorotate dehydrogenase (quinone) from Akkermansia muciniphila (strain ATCC BAA-835 / DSM 22959 / JCM 33894 / BCRC 81048 / CCUG 64013 / CIP 107961 / Muc).